Here is a 195-residue protein sequence, read N- to C-terminus: Triosephosphate isomerase, cytosolic (195 aa).

His37 (electrophile) is an active-site residue. Glu107 (proton acceptor) is an active-site residue.

Belongs to the triosephosphate isomerase family. Homodimer.

The protein resides in the cytoplasm. It catalyses the reaction D-glyceraldehyde 3-phosphate = dihydroxyacetone phosphate. It participates in carbohydrate biosynthesis; gluconeogenesis. It functions in the pathway carbohydrate degradation; glycolysis; D-glyceraldehyde 3-phosphate from glycerone phosphate: step 1/1. This chain is Triosephosphate isomerase, cytosolic, found in Lactuca sativa (Garden lettuce).